The sequence spans 466 residues: Probable periplasmic serine protease do/HhoA-like (466 aa).

The signal sequence occupies residues 1-29 (MKKTRFVLNSIALGLSVLSTSFVAHVAQA). Residues His120, Asp150, and Ser226 each act as charge relay system in the active site. PDZ domains lie at 270-361 (ILEF…LRDG) and 367-458 (KMKL…LRGD).

The protein belongs to the peptidase S1C family.

It is found in the periplasm. The protein is Probable periplasmic serine protease do/HhoA-like of Haemophilus influenzae (strain ATCC 51907 / DSM 11121 / KW20 / Rd).